The primary structure comprises 626 residues: Phosphomethylpyrimidine synthase (626 aa).

The disordered stretch occupies residues 1-22; that stretch reads MTKQEKAINLSESAQVDQQSVQ. A compositionally biased stretch (polar residues) spans 10-22; the sequence is LSESAQVDQQSVQ. Substrate contacts are provided by residues Asn-232, Met-261, Tyr-290, His-326, 346–348, 387–390, and Glu-426; these read SRG and DGLR. Residue His-430 coordinates Zn(2+). Position 453 (Tyr-453) interacts with substrate. His-494 provides a ligand contact to Zn(2+). [4Fe-4S] cluster-binding residues include Cys-574, Cys-577, and Cys-582.

This sequence belongs to the ThiC family. As to quaternary structure, homodimer. [4Fe-4S] cluster serves as cofactor.

It catalyses the reaction 5-amino-1-(5-phospho-beta-D-ribosyl)imidazole + S-adenosyl-L-methionine = 4-amino-2-methyl-5-(phosphooxymethyl)pyrimidine + CO + 5'-deoxyadenosine + formate + L-methionine + 3 H(+). Its pathway is cofactor biosynthesis; thiamine diphosphate biosynthesis. Catalyzes the synthesis of the hydroxymethylpyrimidine phosphate (HMP-P) moiety of thiamine from aminoimidazole ribotide (AIR) in a radical S-adenosyl-L-methionine (SAM)-dependent reaction. This Pseudomonas putida (strain GB-1) protein is Phosphomethylpyrimidine synthase.